The chain runs to 1037 residues: Outer dynein arm-docking complex subunit 2 (1037 aa).

2 stretches are compositionally biased toward basic and acidic residues: residues 316–334 (EEQQKDNQIFEKPKTEDGH) and 376–391 (SSIKDSQEEKQGKLEK). Disordered stretches follow at residues 316 to 353 (EEQQKDNQIFEKPKTEDGHSSVAGSEKSKIEKISFGKS) and 376 to 439 (SSIK…ANAD). 10 ARM repeats span residues 477–516 (ETCQLAIRDVGGLEVLINLLDTDEVKCKIGSLKILKEISH), 518–557 (PQIRRNIVDLGGLPIMVNILDSPHKSLKCLSAETIANVAK), 528–570 (GGLP…QHGG), 615–654 (HSNKEAIRKAGGIPLLARLLKTSHENMLIPVVGTLQECAS), 656–695 (ENYRAAIKAERIIENLVKNLNSENEQLQEHCAMAIYQCAE), 739–778 (KENVIKFREYKAIETLVGLLTDQPEEVLVNVVGALGECCQ), 821–860 (PESMAIIDRLDGVRLLWSLLKNPHPDVKASAAWALCPCIE), 864–903 (DAGEMVRSFVGGLELVVNLLKSDNKEVLASVCAAITNIAK), 905–944 (QENLAVITDHGVVPLLSKLANTNNDKLRRHLAEAISRCCM), and 946–985 (GRNRVAFGEHKAVAPLVRYLKSNDTNVHRATAQALYQLSE). N6-methyllysine is present on K545.

As to quaternary structure, component of the outer dynein arm-docking complex along with ODAD1, ODAD3, and ODAD4. Interacts with CFAP61. In terms of tissue distribution, highly expressed in testis. In males, also detected at lower levels in lung, brain, liver and muscle. In females, detected in ovary.

It localises to the cytoplasm. Its subcellular location is the cytoskeleton. The protein resides in the cilium axoneme. It is found in the cilium basal body. Component of the outer dynein arm-docking complex (ODA-DC) that mediates outer dynein arms (ODA) binding onto the doublet microtubule. Involved in mediating assembly of both ODAs and their axonemal docking complex onto ciliary microtubules. This Mus musculus (Mouse) protein is Outer dynein arm-docking complex subunit 2.